The chain runs to 340 residues: Ketol-acid reductoisomerase (NADP(+)) (340 aa).

A KARI N-terminal Rossmann domain is found at 3-182 (VTMYYEEDVE…GCARVGIIET (180 aa)). NADP(+) is bound by residues 26 to 29 (YGSQ), arginine 49, serine 53, and 83 to 86 (DELQ). The active site involves histidine 108. Residue glycine 134 participates in NADP(+) binding. Positions 183–328 (TFKEETEEDL…AELRKAMPFT (146 aa)) constitute a KARI C-terminal knotted domain. Residues aspartate 191, glutamate 195, glutamate 227, and glutamate 231 each contribute to the Mg(2+) site. Serine 252 contributes to the substrate binding site.

Belongs to the ketol-acid reductoisomerase family. Mg(2+) serves as cofactor.

It carries out the reaction (2R)-2,3-dihydroxy-3-methylbutanoate + NADP(+) = (2S)-2-acetolactate + NADPH + H(+). The catalysed reaction is (2R,3R)-2,3-dihydroxy-3-methylpentanoate + NADP(+) = (S)-2-ethyl-2-hydroxy-3-oxobutanoate + NADPH + H(+). Its pathway is amino-acid biosynthesis; L-isoleucine biosynthesis; L-isoleucine from 2-oxobutanoate: step 2/4. The protein operates within amino-acid biosynthesis; L-valine biosynthesis; L-valine from pyruvate: step 2/4. Involved in the biosynthesis of branched-chain amino acids (BCAA). Catalyzes an alkyl-migration followed by a ketol-acid reduction of (S)-2-acetolactate (S2AL) to yield (R)-2,3-dihydroxy-isovalerate. In the isomerase reaction, S2AL is rearranged via a Mg-dependent methyl migration to produce 3-hydroxy-3-methyl-2-ketobutyrate (HMKB). In the reductase reaction, this 2-ketoacid undergoes a metal-dependent reduction by NADPH to yield (R)-2,3-dihydroxy-isovalerate. This Lactococcus lactis subsp. cremoris (strain MG1363) protein is Ketol-acid reductoisomerase (NADP(+)).